Reading from the N-terminus, the 352-residue chain is Protein TIFY 6B (352 aa).

Residues 1 to 71 are disordered; sequence MERDFLGLGS…KSGNYHLPHS (71 aa). The segment covering 17–26 has biased composition (basic and acidic residues); that stretch reads VKEETSESSR. Positions 34-54 are enriched in polar residues; it reads MNWSFSNKVSASSSQFLSFRP. The Tify domain occupies 172–207; it reads PIGSPAQLTIFYAGSVCVYDDISPEKAKAIMLLAGN. Positions 302-326 match the Jas motif; the sequence is PLARKASLARFLEKRKERVTSVSPY. A Nuclear localization signal motif is present at residues 304-311; sequence ARKASLAR.

It belongs to the TIFY/JAZ family. As to quaternary structure, homo- and heterodimer. Interacts with COI1, MYC2, MYC3, MYC4, TIFY10A/JAZ1, TIFY10B/JAZ2, TIFY6A/JAZ4, TIFY5A/JAZ8, TIFY7/JAZ9, TIFY9/JAZ10 and TIFY3A/JAZ11. Interacts (via TIFY domain) with AFPH2/NINJA. Post-translationally, ubiquitinated. Targeted for degradation by the SCF(COI1) E3 ubiquitin ligase-proteasome pathway during jasmonate signaling. In terms of tissue distribution, srtongly expressed in root tips.

The protein localises to the nucleus. Its function is as follows. Repressor of jasmonate responses. Jasmonoyl-isoleucine (JA-Ile) specifically promotes COI1-TIFY6B/JAZ3 interaction. Acts as a negative regulator of MYC2 function. Feed-back regulated by MYC2. The protein is Protein TIFY 6B (TIFY6B) of Arabidopsis thaliana (Mouse-ear cress).